Reading from the N-terminus, the 122-residue chain is EPIDERMAL PATTERNING FACTOR-like protein 1 (122 aa).

The first 26 residues, 1–26 (MFAIYKSTLLLLPLILILLITPQVSS), serve as a signal peptide directing secretion. Intrachain disulfides connect Cys-55–Cys-113, Cys-59–Cys-65, and Cys-62–Cys-115.

This sequence belongs to the plant cysteine rich small secretory peptide family. Epidermal patterning factor subfamily.

The protein resides in the secreted. Functionally, controls stomatal patterning. The chain is EPIDERMAL PATTERNING FACTOR-like protein 1 from Arabidopsis thaliana (Mouse-ear cress).